A 516-amino-acid chain; its full sequence is Probable fucosyltransferase 8 (516 aa).

The chain crosses the membrane as a helical; Signal-anchor for type II membrane protein span at residues isoleucine 5–phenylalanine 25. The Lumenal segment spans residues asparagine 26–asparagine 516. Asparagine 35, asparagine 116, asparagine 211, asparagine 362, and asparagine 463 each carry an N-linked (GlcNAc...) asparagine glycan.

The protein belongs to the glycosyltransferase 37 family. Expressed in leaves and stems.

It localises to the golgi apparatus. The protein localises to the golgi stack membrane. Its pathway is protein modification; protein glycosylation. Functionally, may be involved in cell wall biosynthesis. May act as a fucosyltransferase. This Arabidopsis thaliana (Mouse-ear cress) protein is Probable fucosyltransferase 8 (FUT8).